We begin with the raw amino-acid sequence, 470 residues long: 3-isopropylmalate dehydratase large subunit (470 aa).

Positions 348, 409, and 412 each coordinate [4Fe-4S] cluster.

This sequence belongs to the aconitase/IPM isomerase family. LeuC type 1 subfamily. Heterodimer of LeuC and LeuD. Requires [4Fe-4S] cluster as cofactor.

It carries out the reaction (2R,3S)-3-isopropylmalate = (2S)-2-isopropylmalate. The protein operates within amino-acid biosynthesis; L-leucine biosynthesis; L-leucine from 3-methyl-2-oxobutanoate: step 2/4. Its function is as follows. Catalyzes the isomerization between 2-isopropylmalate and 3-isopropylmalate, via the formation of 2-isopropylmaleate. In Thioalkalivibrio sulfidiphilus (strain HL-EbGR7), this protein is 3-isopropylmalate dehydratase large subunit.